A 278-amino-acid chain; its full sequence is HTH-type transcriptional activator RhaS (278 aa).

Residues 174-272 (NLLLAWLEDH…NWSPRDIRQG (99 aa)) form the HTH araC/xylS-type domain. 2 consecutive DNA-binding regions (H-T-H motif) follow at residues 191–212 (DAVA…KQQT) and 239–262 (VTDI…HREF).

As to quaternary structure, binds DNA as a dimer.

Its subcellular location is the cytoplasm. Activates expression of the rhaBAD and rhaT operons. This Shigella boydii serotype 18 (strain CDC 3083-94 / BS512) protein is HTH-type transcriptional activator RhaS.